The sequence spans 140 residues: Protein E6 (140 aa).

Zinc fingers lie at residues 28 to 64 and 101 to 137; these read CNFCKRFLSYTELTDFDTKCLSLIWKDDFVFACCRYC and CHHCLKLLNQIEKLDICGRSELFHKVRRGWKGLCRQC.

It belongs to the papillomaviridae E6 protein family. Forms homodimers. Interacts with ubiquitin-protein ligase UBE3A/E6-AP; this interaction stimulates UBE3A ubiquitin activity. Interacts with host BAK1.

The protein resides in the host cytoplasm. It is found in the host nucleus. In terms of biological role, plays a major role in the induction and maintenance of cellular transformation. E6 associates with host UBE3A/E6-AP ubiquitin-protein ligase and modulates its activity. Protects host keratinocytes from apoptosis by mediating the degradation of host BAK1. May also inhibit host immune response. The polypeptide is Protein E6 (Human papillomavirus 24).